Reading from the N-terminus, the 498-residue chain is ATP synthase subunit beta, chloroplastic (498 aa).

Phosphothreonine is present on Thr6. At Ser13 the chain carries Phosphoserine. 172 to 179 (GGAGVGKT) contacts ATP.

The protein belongs to the ATPase alpha/beta chains family. As to quaternary structure, F-type ATPases have 2 components, CF(1) - the catalytic core - and CF(0) - the membrane proton channel. CF(1) has five subunits: alpha(3), beta(3), gamma(1), delta(1), epsilon(1). CF(0) has four main subunits: a(1), b(1), b'(1) and c(9-12).

It localises to the plastid. The protein localises to the chloroplast thylakoid membrane. It catalyses the reaction ATP + H2O + 4 H(+)(in) = ADP + phosphate + 5 H(+)(out). Functionally, produces ATP from ADP in the presence of a proton gradient across the membrane. The catalytic sites are hosted primarily by the beta subunits. The polypeptide is ATP synthase subunit beta, chloroplastic (Nasturtium officinale (Watercress)).